The chain runs to 312 residues: Olfactory receptor 8H3 (312 aa).

Over 1–26 (MMGRRNDTNVADFILTGLSDSEEVQM) the chain is Extracellular. An N-linked (GlcNAc...) asparagine glycan is attached at N6. The helical transmembrane segment at 27–47 (ALFMLFLLIYLITMLGNVGML) threads the bilayer. At 48–55 (LIIRLDLQ) the chain is on the cytoplasmic side. A helical membrane pass occupies residues 56–76 (LHTPMYFFLTHLSFIDLSYST). The Extracellular segment spans residues 77–99 (VVTPKTLANLLTSNYISFTGCFA). C97 and C189 are oxidised to a cystine. A helical membrane pass occupies residues 100–120 (QMFCFVFLGTAECYLLSSMAY). Topologically, residues 121-139 (DRYAAICSPLHYTVIMPKR) are cytoplasmic. The helical transmembrane segment at 140–160 (LCLALITGPYVIGFMDSFVNV) threads the bilayer. Residues 161–197 (VSMSRLHFCDSNIIHHFFCDTSPILALSCTDTDNTEM) are Extracellular-facing. A helical transmembrane segment spans residues 198–217 (LIFIIAGSTLMVSLITISAS). The Cytoplasmic portion of the chain corresponds to 218-237 (YVSILSTILKINSTSGKQKA). Residues 238–258 (FSTCVSHLLGVTIFYGTMIFT) traverse the membrane as a helical segment. The Extracellular segment spans residues 259 to 271 (YLKPRKSYSLGRD). Residues 272–292 (QVAPVFYTIVIPMLNPLIYSL) form a helical membrane-spanning segment. Topologically, residues 293–312 (RNREVKNALIRVMQRRQDSR) are cytoplasmic.

This sequence belongs to the G-protein coupled receptor 1 family.

The protein resides in the cell membrane. In terms of biological role, odorant receptor. The polypeptide is Olfactory receptor 8H3 (OR8H3) (Homo sapiens (Human)).